The chain runs to 237 residues: Purine nucleoside phosphorylase DeoD-type (237 aa).

Residue His-4 participates in a purine D-ribonucleoside binding. Phosphate is bound by residues Gly-20, Arg-24, Arg-43, and 87-90 (RVGT). Residues 179-181 (EME) and 203-204 (SD) each bind a purine D-ribonucleoside. Asp-204 acts as the Proton donor in catalysis.

Belongs to the PNP/UDP phosphorylase family. In terms of assembly, homohexamer; trimer of homodimers.

It carries out the reaction a purine D-ribonucleoside + phosphate = a purine nucleobase + alpha-D-ribose 1-phosphate. The enzyme catalyses a purine 2'-deoxy-D-ribonucleoside + phosphate = a purine nucleobase + 2-deoxy-alpha-D-ribose 1-phosphate. Catalyzes the reversible phosphorolytic breakdown of the N-glycosidic bond in the beta-(deoxy)ribonucleoside molecules, with the formation of the corresponding free purine bases and pentose-1-phosphate. The polypeptide is Purine nucleoside phosphorylase DeoD-type (Streptococcus pyogenes serotype M5 (strain Manfredo)).